The primary structure comprises 1764 residues: Latent-transforming growth factor beta-binding protein 2 (1764 aa).

Residues 1–35 form the signal peptide; it reads MRAPTTVRCSGRIQRARWRGFLPLVLALLMGTSHA. Residues 80-140 are disordered; the sequence is PGLSPSEWNQ…PPAARTAHSV (61 aa). The interval 94–115 is heparin-binding; sequence IPGRLAEAEARRPSRAQQLRRV. Polar residues predominate over residues 108–128; it reads RAQQLRRVQSPVQTRRSNPRG. A glycan (N-linked (GlcNAc...) asparagine) is linked at asparagine 175. Residues 181 to 213 enclose the EGF-like 1 domain; the sequence is IKPVCQPPCQNRGSCSRPQLCICRSGFRGARCE. 3 disulfides stabilise this stretch: cysteine 185–cysteine 195, cysteine 189–cysteine 201, and cysteine 203–cysteine 212. The interval 220-279 is disordered; it reads EFDPQNARPVPRRSVEGAPGPHRSSEARGSLVTRIQPLLPPLPPPPSRTLSQTRPLQQHA. The interval 226 to 243 is heparin-binding; that stretch reads ARPVPRRSVEGAPGPHRS. A compositionally biased stretch (pro residues) spans 257–266; it reads LLPPLPPPPS. N-linked (GlcNAc...) asparagine glycosylation is present at asparagine 330. Position 331–341 (331–341) interacts with heparin; it reads LTEKIKKIKVV. Residues 383–415 enclose the EGF-like 2 domain; the sequence is RIYFCQIPCLNGGRCIGRDECWCPANSTGKFCH. 3 cysteine pairs are disulfide-bonded: cysteine 387–cysteine 397, cysteine 391–cysteine 403, and cysteine 405–cysteine 414. N-linked (GlcNAc...) asparagine glycosylation occurs at asparagine 408. A disordered region spans residues 484–529; it reads EVDPVPEDNSVETRASHRPHGSSGHSHWASNSIPARAGEAPRPPPV. At serine 493 the chain carries Phosphoserine. The TB 1 domain maps to 538–590; the sequence is GQCYLSTVNGQCANPLGELTSQEDCCGSVGTSWGVTSCAPCPPRPAFPVIENG. Cystine bridges form between cysteine 540–cysteine 562, cysteine 549–cysteine 575, and cysteine 563–cysteine 578. The N-linked (GlcNAc...) asparagine glycan is linked to asparagine 602. Positions 608–648 constitute an EGF-like 3; calcium-binding domain; that stretch reads DINECLTLGLCKDSECVNTRGSYLCTCRPGLMLDPSRSRCV. Intrachain disulfides connect cysteine 612-cysteine 623, cysteine 618-cysteine 632, cysteine 634-cysteine 647, cysteine 660-cysteine 682, cysteine 669-cysteine 695, cysteine 683-cysteine 698, and cysteine 684-cysteine 710. Positions 658 to 710 constitute a TB 2 domain; the sequence is GLCYRSMVSGTCTLPLVQRITKQICCCSRVGKAWGSKCEHCPLPGTEAFREIC. Disordered stretches follow at residues 729 to 759 and 786 to 809; these read KAEE…RQPL and SAPH…LPGQ. An EGF-like 4 domain is found at 834-876; the sequence is GFDPCFAGASNICGPGTCVKLPNGYRCVCSPGYQLHPSQDYCT. 45 disulfides stabilise this stretch: cysteine 838/cysteine 851, cysteine 846/cysteine 860, cysteine 862/cysteine 875, cysteine 881/cysteine 892, cysteine 886/cysteine 901, cysteine 903/cysteine 918, cysteine 924/cysteine 935, cysteine 930/cysteine 944, cysteine 946/cysteine 958, cysteine 964/cysteine 975, cysteine 970/cysteine 984, cysteine 987/cysteine 998, cysteine 1004/cysteine 1015, cysteine 1010/cysteine 1024, cysteine 1026/cysteine 1039, cysteine 1045/cysteine 1056, cysteine 1051/cysteine 1065, cysteine 1068/cysteine 1081, cysteine 1087/cysteine 1098, cysteine 1093/cysteine 1107, cysteine 1110/cysteine 1123, cysteine 1129/cysteine 1141, cysteine 1136/cysteine 1150, cysteine 1152/cysteine 1164, cysteine 1170/cysteine 1182, cysteine 1176/cysteine 1191, cysteine 1193/cysteine 1206, cysteine 1212/cysteine 1223, cysteine 1218/cysteine 1232, cysteine 1234/cysteine 1247, cysteine 1253/cysteine 1265, cysteine 1259/cysteine 1274, cysteine 1276/cysteine 1289, cysteine 1295/cysteine 1307, cysteine 1302/cysteine 1316, cysteine 1318/cysteine 1332, cysteine 1359/cysteine 1382, cysteine 1369/cysteine 1394, cysteine 1383/cysteine 1397, cysteine 1435/cysteine 1448, cysteine 1443/cysteine 1457, cysteine 1459/cysteine 1472, cysteine 1478/cysteine 1488, cysteine 1483/cysteine 1497, and cysteine 1499/cysteine 1512. The EGF-like 5; calcium-binding domain occupies 877–919; the sequence is DDNECLRNPCEGRGRCVNSVGSYSCLCYPGYTLATLGDTQECQ. In terms of domain architecture, EGF-like 6; calcium-binding spans 920 to 959; the sequence is DVDECEQPGVCSGGRCSNTEGSYHCECDQGYVMVRRGHCQ. An EGF-like 7; calcium-binding domain is found at 960–999; sequence DINECRHPGTCPDGRCVNSPGSYTCLACEEGYIGQSGNCV. One can recognise an EGF-like 8; calcium-binding domain in the interval 1000-1040; the sequence is DMNECLTPGICAHGRCINMEGSFRCSCEPGYELTPDKKGCR. The EGF-like 9; calcium-binding domain maps to 1041–1082; sequence DVDECASRASCPTGLCLNTEGSFTCSACQSGYWVNEDGTACE. The 42-residue stretch at 1083-1124 folds into the EGF-like 10; calcium-binding domain; it reads DLDECAFPGVCPTGVCTNTVGSFSCKDCDRGFRPSPLGNSCE. An EGF-like 11; calcium-binding domain is found at 1125–1165; the sequence is DVDECEGPQNSCLGGECKNTDGSYQCLCPQGFQLANGTVCE. Asparagine 1160 carries an N-linked (GlcNAc...) asparagine glycan. Positions 1166–1207 constitute an EGF-like 12; calcium-binding domain; it reads DVDECVGEEHCAPHGECLNSPGSFFCLCAPGFASAEGGTRCQ. The region spanning 1208–1248 is the EGF-like 13; calcium-binding domain; sequence DVDECATTEPCLGGHCVNTEGSFNCLCETGFQPAPDSGECV. The EGF-like 15; calcium-binding domain occupies 1249–1290; sequence DIDECANDTVCGNHGFCDNTDGSFRCLCDQGFETSPSGWECV. A glycan (N-linked (GlcNAc...) asparagine) is linked at asparagine 1255. An EGF-like 16; calcium-binding domain is found at 1291–1333; sequence DVNECELMLAVCGDALCENVEGSFLCLCASDLEEYDAEEGHCR. A TB 3 domain is found at 1357–1409; it reads MECYAEHNGGPPCSQILGQNSTQAECCSTQGARWGETCDPCPSEDSVEFSELC. N-linked (GlcNAc...) asparagine glycosylation occurs at asparagine 1376. The EGF-like 17; calcium-binding domain occupies 1431–1473; sequence DADECILFGPALCQNGRCLNTVPGYICLCNPGYHYDAVSRKCQ. Residues 1474–1513 form the EGF-like 18; calcium-binding domain; that stretch reads DHNECQDLACENGECVNTEGSFHCFCSPPLILDLSGQRCV. An N-linked (GlcNAc...) asparagine glycan is attached at asparagine 1514. The TB 4 domain occupies 1530 to 1582; the sequence is DICWKKVTNDVCSQPLRGHHTTYTECCCQDGEAWSQQCALCPPRSSEVYAQLC. Disulfide bonds link cysteine 1532–cysteine 1555, cysteine 1541–cysteine 1567, cysteine 1556–cysteine 1570, cysteine 1557–cysteine 1582, cysteine 1680–cysteine 1691, cysteine 1686–cysteine 1700, cysteine 1702–cysteine 1715, cysteine 1721–cysteine 1736, cysteine 1731–cysteine 1745, and cysteine 1747–cysteine 1760. Positions 1585–1764 are C-terminal domain; it reads ARIEAEREAG…PGPPHCAAKE (180 aa). The 41-residue stretch at 1676 to 1716 folds into the EGF-like 19; calcium-binding domain; the sequence is QAEECGILNGCENGRCVRVREGYTCDCFEGFQLDTALMACV. The region spanning 1717–1761 is the EGF-like 20; calcium-binding domain; that stretch reads DVNECEDLNGAARLCAHGHCENTEGSYRCHCSPGYVAEPGPPHCA.

The protein belongs to the LTBP family. In terms of assembly, forms part of the large latent transforming growth factor beta precursor complex; removal is essential for activation of complex. Interacts with SDC4. Interacts (via C-terminal domain) with FBN1 (via N-terminal domain) in a Ca(+2)-dependent manner. N-Glycosylated. Post-translationally, contains hydroxylated asparagine residues. As to expression, expressed in cortical astrocytes and glioma cells. Expression is up-regulated by TGFB1.

It localises to the secreted. It is found in the extracellular space. The protein localises to the extracellular matrix. May play an integral structural role in elastic-fiber architectural organization and/or assembly. This chain is Latent-transforming growth factor beta-binding protein 2 (Ltbp2), found in Rattus norvegicus (Rat).